A 451-amino-acid chain; its full sequence is Deoxyguanosinetriphosphate triphosphohydrolase-like protein (451 aa).

Positions Arg61 to Gly274 constitute an HD domain.

The protein belongs to the dGTPase family. Type 2 subfamily.

The protein is Deoxyguanosinetriphosphate triphosphohydrolase-like protein of Actinobacillus succinogenes (strain ATCC 55618 / DSM 22257 / CCUG 43843 / 130Z).